The chain runs to 215 residues: ATP-dependent dethiobiotin synthetase BioD (215 aa).

An ATP-binding site is contributed by 13–18; the sequence is DIGKTV. Threonine 17 contacts Mg(2+). Residue lysine 38 is part of the active site. Position 42 (threonine 42) interacts with substrate. Residues aspartate 50, 115 to 118, and 175 to 176 each bind ATP; these read EGAG and NH. Aspartate 50 and glutamate 115 together coordinate Mg(2+).

The protein belongs to the dethiobiotin synthetase family. Homodimer. The cofactor is Mg(2+).

The protein resides in the cytoplasm. It carries out the reaction (7R,8S)-7,8-diammoniononanoate + CO2 + ATP = (4R,5S)-dethiobiotin + ADP + phosphate + 3 H(+). It functions in the pathway cofactor biosynthesis; biotin biosynthesis; biotin from 7,8-diaminononanoate: step 1/2. In terms of biological role, catalyzes a mechanistically unusual reaction, the ATP-dependent insertion of CO2 between the N7 and N8 nitrogen atoms of 7,8-diaminopelargonic acid (DAPA, also called 7,8-diammoniononanoate) to form a ureido ring. The polypeptide is ATP-dependent dethiobiotin synthetase BioD (Neisseria meningitidis serogroup C (strain 053442)).